We begin with the raw amino-acid sequence, 117 residues long: Large ribosomal subunit protein bL19 (117 aa).

This sequence belongs to the bacterial ribosomal protein bL19 family.

Its function is as follows. This protein is located at the 30S-50S ribosomal subunit interface and may play a role in the structure and function of the aminoacyl-tRNA binding site. The protein is Large ribosomal subunit protein bL19 of Vibrio campbellii (strain ATCC BAA-1116).